The following is a 424-amino-acid chain: ATP-citrate synthase alpha chain protein 3 (424 aa).

Citrate is bound by residues N343, T345, and R376.

Belongs to the succinate/malate CoA ligase beta subunit family. In terms of assembly, heterooctamer of 4 alpha and 4 beta chains.

The protein resides in the cytoplasm. The protein localises to the cytosol. The catalysed reaction is oxaloacetate + acetyl-CoA + ADP + phosphate = citrate + ATP + CoA. In terms of biological role, ATP citrate-lyase is the primary enzyme responsible for the synthesis of cytosolic acetyl-CoA, used for the elongation of fatty acids and biosynthesis of isoprenoids, flavonoids and malonated derivatives. May supply substrate to the cytosolic acetyl-CoA carboxylase, which generates the malonyl-CoA used for the synthesis of a multitude of compounds, including very long chain fatty acids and flavonoids. Required for normal growth and development and elongation of C18 fatty acids to C20 to C24 fatty acids in seeds. In contrast to all known animal ACL enzymes having a homomeric structure, plant ACLs are composed of alpha and beta chains. The protein is ATP-citrate synthase alpha chain protein 3 (ACLA-3) of Arabidopsis thaliana (Mouse-ear cress).